The chain runs to 302 residues: Sulfate adenylyltransferase subunit 2 (302 aa).

It belongs to the PAPS reductase family. CysD subfamily. As to quaternary structure, heterodimer composed of CysD, the smaller subunit, and CysN.

It catalyses the reaction sulfate + ATP + H(+) = adenosine 5'-phosphosulfate + diphosphate. The protein operates within sulfur metabolism; hydrogen sulfide biosynthesis; sulfite from sulfate: step 1/3. Its function is as follows. With CysN forms the ATP sulfurylase (ATPS) that catalyzes the adenylation of sulfate producing adenosine 5'-phosphosulfate (APS) and diphosphate, the first enzymatic step in sulfur assimilation pathway. APS synthesis involves the formation of a high-energy phosphoric-sulfuric acid anhydride bond driven by GTP hydrolysis by CysN coupled to ATP hydrolysis by CysD. The chain is Sulfate adenylyltransferase subunit 2 from Escherichia coli O9:H4 (strain HS).